We begin with the raw amino-acid sequence, 109 residues long: ATP-dependent Clp protease adapter protein ClpS (109 aa).

Residues 1–25 (MSERKEGDSGAGVRSAVITQTKPKT) are disordered.

It belongs to the ClpS family. In terms of assembly, binds to the N-terminal domain of the chaperone ClpA.

Its function is as follows. Involved in the modulation of the specificity of the ClpAP-mediated ATP-dependent protein degradation. The chain is ATP-dependent Clp protease adapter protein ClpS from Phenylobacterium zucineum (strain HLK1).